We begin with the raw amino-acid sequence, 359 residues long: Peptide chain release factor 1 (359 aa).

An N5-methylglutamine modification is found at Gln-236.

Belongs to the prokaryotic/mitochondrial release factor family. In terms of processing, methylated by PrmC. Methylation increases the termination efficiency of RF1.

Its subcellular location is the cytoplasm. Peptide chain release factor 1 directs the termination of translation in response to the peptide chain termination codons UAG and UAA. The chain is Peptide chain release factor 1 from Streptococcus pyogenes serotype M6 (strain ATCC BAA-946 / MGAS10394).